Consider the following 429-residue polypeptide: MDRIRIVGGNKLNGTIPISGAKNAALPLMIAALLTDETLILENVPRLADVALLQRILGNHGVDIMSAGKRPGDREHQGQTLHISAANIIDTTAPYDLVSKMRASFWVIGPLLARMKEANVSLPGGCAIGTRPVDLLIMALEKLGAEIVIDGGYAVARAPQGLHGAEIEFPKVTVSGTHVALMAATLAKGTTVITNAACEPEIADVADCLNKMGAKITGAGTSRIVIEGVEKLHGARHAVLPDRIEAGTYAMAVAMTGGDVQLQGARPELMQAALDVLIEAGATITQTNEGIRVQRNGSGIRPVDVSTSPFPGFPTDLQAQLMALMTRAEGSSRITETIFENRFMHVQELARFGARIALDGETATIEGRPKLRGAPVMATDLRASVSLVIAALAAEGETMVNRIYHLDRGFERLEDKLSACGATIERISG.

Lys22–Asn23 provides a ligand contact to phosphoenolpyruvate. Arg102 provides a ligand contact to UDP-N-acetyl-alpha-D-glucosamine. The Proton donor role is filled by Cys126. 2-(S-cysteinyl)pyruvic acid O-phosphothioketal is present on Cys126. UDP-N-acetyl-alpha-D-glucosamine-binding positions include Arg131–Leu135, Asp316, and Ile338.

It belongs to the EPSP synthase family. MurA subfamily.

The protein resides in the cytoplasm. It carries out the reaction phosphoenolpyruvate + UDP-N-acetyl-alpha-D-glucosamine = UDP-N-acetyl-3-O-(1-carboxyvinyl)-alpha-D-glucosamine + phosphate. It participates in cell wall biogenesis; peptidoglycan biosynthesis. In terms of biological role, cell wall formation. Adds enolpyruvyl to UDP-N-acetylglucosamine. This chain is UDP-N-acetylglucosamine 1-carboxyvinyltransferase, found in Afipia carboxidovorans (strain ATCC 49405 / DSM 1227 / KCTC 32145 / OM5) (Oligotropha carboxidovorans).